Consider the following 199-residue polypeptide: Protein GrpE (199 aa).

Over residues 1 to 24 (MSKQNKKDWKKFKDEHKEEHKVEN) the composition is skewed to basic and acidic residues. Residues 1-52 (MSKQNKKDWKKFKDEHKEEHKVENEILEEETDEESQHQEPALGHPSYTALEE) form a disordered region.

It belongs to the GrpE family. In terms of assembly, homodimer.

It localises to the cytoplasm. Participates actively in the response to hyperosmotic and heat shock by preventing the aggregation of stress-denatured proteins, in association with DnaK and GrpE. It is the nucleotide exchange factor for DnaK and may function as a thermosensor. Unfolded proteins bind initially to DnaJ; upon interaction with the DnaJ-bound protein, DnaK hydrolyzes its bound ATP, resulting in the formation of a stable complex. GrpE releases ADP from DnaK; ATP binding to DnaK triggers the release of the substrate protein, thus completing the reaction cycle. Several rounds of ATP-dependent interactions between DnaJ, DnaK and GrpE are required for fully efficient folding. In Legionella pneumophila, this protein is Protein GrpE.